Consider the following 753-residue polypeptide: Bifunctional terpene synthase FUP1 (753 aa).

A terpene cyclase region spans residues 1–329 (MGPLLYRSRH…CSACPRQNAW (329 aa)). Aspartate 96 is a binding site for Mg(2+). The DDXXD 1 motif lies at 96–100 (DDTGE). The NSE/DTE motif lies at 231–239 (NDYFSWERE). The segment at 330-745 (KNDTLSNGQN…MLRLCLAKLS (416 aa)) is prenyltransferase. Isopentenyl diphosphate is bound by residues lysine 461, arginine 464, and histidine 493. Aspartate 500 and aspartate 504 together coordinate Mg(2+). The short motif at 500-504 (DDLED) is the DDXXD 2 element. Residue arginine 509 participates in dimethylallyl diphosphate binding. Residue arginine 510 participates in isopentenyl diphosphate binding. 6 residues coordinate dimethylallyl diphosphate: lysine 587, threonine 588, glutamine 625, asparagine 632, lysine 640, and lysine 650.

It in the N-terminal section; belongs to the terpene synthase family. In the C-terminal section; belongs to the FPP/GGPP synthase family. In terms of assembly, hexamer. Requires Mg(2+) as cofactor.

The catalysed reaction is isopentenyl diphosphate + (2E,6E)-farnesyl diphosphate = (2E,6E,10E)-geranylgeranyl diphosphate + diphosphate. Its pathway is secondary metabolite biosynthesis; terpenoid biosynthesis. In terms of biological role, bifunctional terpene synthase; part of the gene cluster that mediates the biosynthesis of the mycotoxin fusaproliferin (FUP) that belongs to the class of bicyclic sesterterpenoids. The FUP biosynthetic pathway starts with the enzyme encoded by FUP1 that combines a C-terminal prenyltransferase domain responsible for the synthesis of geranylgeranyl diphosphate with the N-terminal terpene cyclase domain, to yield preterpestacin I. Preterpestacin I is then decorated by oxygenation steps that are catalyzed by two cytochrome P450 monooxygenases. First, FUP2 introduces a hydroxyl group at the C-24 position resulting in the formation of preterpestacin IIa, which can be further oxidized. The second P450 monooxygenase catalyzes the hydroxylation at C-16 and C-17 of preterpestacin IIa, producing preterpestacin III. Subsequently, the FAD-dependent oxidoreductase FUP4 catalyzes the oxidation of the hydroxy group at the C-16 position to a keto group, leading to the formation of (-)-terpestacin, which is the immediate precursor of FUP. The final step in the proposed biosynthetic pathway is the addition of an acetyl group at the C-24 position of terpestacin, which is catalyzed by the acetyltransferase FUP5. This Fusarium proliferatum (strain ET1) (Orchid endophyte fungus) protein is Bifunctional terpene synthase FUP1.